Here is a 375-residue protein sequence, read N- to C-terminus: Succinyl-diaminopimelate desuccinylase (375 aa).

His-66 serves as a coordination point for Zn(2+). Residue Asp-68 is part of the active site. Asp-99 serves as a coordination point for Zn(2+). Glu-133 serves as the catalytic Proton acceptor. Positions 134, 162, and 348 each coordinate Zn(2+).

This sequence belongs to the peptidase M20A family. DapE subfamily. Homodimer. Zn(2+) is required as a cofactor. Requires Co(2+) as cofactor.

It catalyses the reaction N-succinyl-(2S,6S)-2,6-diaminopimelate + H2O = (2S,6S)-2,6-diaminopimelate + succinate. The protein operates within amino-acid biosynthesis; L-lysine biosynthesis via DAP pathway; LL-2,6-diaminopimelate from (S)-tetrahydrodipicolinate (succinylase route): step 3/3. Functionally, catalyzes the hydrolysis of N-succinyl-L,L-diaminopimelic acid (SDAP), forming succinate and LL-2,6-diaminopimelate (DAP), an intermediate involved in the bacterial biosynthesis of lysine and meso-diaminopimelic acid, an essential component of bacterial cell walls. This is Succinyl-diaminopimelate desuccinylase from Yersinia pseudotuberculosis serotype O:1b (strain IP 31758).